We begin with the raw amino-acid sequence, 958 residues long: GPMGPSGPRGIPGPPGAPGPQGFGPPGEPGEPGASGPMGPRGPPGPPGKNGDDGEAGKPGRPGERGPPGPQGARGIPGTAGIPGMKGHRGFSGIDGAKGDAGPAGPKGEPGSPGENGAPGQMGPRGIPGERGRPGAPGPAGARGNDGATGAAGPPGPTGPAGPPGFPGAVGAKGEAGPQGARGSEGPQGVRGEPGPPGPAGAAGPAGNPGAGANGAPGIAGAPGFPGARGPSGPQGPSGPPGPKGNSGEPGAPGSKKGEPGPTGVQGPPGPAGEEGKRGARGEPGPTGIPGPPGERGGPGSRGFPGSDGVAGPKGPAGERGAPGPAGPKGSPGEAGRPGEAGIPGAKGITGSPGSPGPDGKTGPPGPAGQDGRPGPPGPPGARGQAGVMGFPGPKGAAGEPGKAGERGVPGPPGAVGPAGKDGEAGAQGPPGPAGPAGERGEPGPAGSPGFQGIPGPAGPPGESGKPGEVPGDIGAPGPSGARGERGFPGERGVQGPPGPAGPRGAGAAGIPGPKGDRGDAGPKGADGAPGKDGVRGITGPIGPPGPAGAPGDKGESGPSGPAGPTGARGAPGDRGEPGPPGPAGFAGPPGADGQPGAKGEPGDAGAKGDAGPAGPAGPTGPPGPIGNVGAPGPKGARGSAGPPGATGFPGAAGRVGPPGPAGNAGPPGPPGPVGKEGGKGPRGETGPAGRPGEVGPPGPPGPAGEKGSPGADGPAGAPGTPGPQGIAGQRGVVGIPGQRGERGFPGIPGPSGEPGKQGPSGASGERGPPGPVGPPGIAGPPGESGREGAPGAEGSPGRGDRGETGPAGPPGAPGAPGAPGPVGPAGKSGDRGETGPAGPAGPIGPVGARGPTGPQGPRGDKGETGEQGDRGIKGHRGFSGIQGPTGPPGAPGEQGPSGASGPAGPRGPPGSAGAPGKDGINGIPGPIGPPGPRGRTGDAGPVGPPGPPGPPGPPGPP.

The interval 1 to 958 (GPMGPSGPRG…PGPPGPPGPP (958 aa)) is disordered. Positions 50–64 (NGDDGEAGKPGRPGE) are enriched in basic and acidic residues. Ser-92 carries the post-translational modification Phosphoserine. 2 stretches are compositionally biased toward low complexity: residues 100-116 (DAGPAGPKGEPGSPGEN) and 139-152 (PAGARGNDGATGAA). Positions 154-166 (PPGPTGPAGPPGF) are enriched in pro residues. Over residues 216–232 (APGIAGAPGFPGARGPS) the composition is skewed to low complexity. A compositionally biased stretch (gly residues) spans 294–303 (GERGGPGSRG). Low complexity-rich tracts occupy residues 304-335 (FPGSDGVAGPKGPAGERGAPGPAGPKGSPGEA), 347-373 (KGITGSPGSPGPDGKTGPPGPAGQDGR), 382-401 (ARGQAGVMGFPGPKGAAGEP), 557-571 (SGPSGPAGPTGARGA), 584-614 (AGFAGPPGADGQPGAKGEPGDAGAKGDAGPA), 640-656 (SAGPPGATGFPGAAGRV), 685-694 (ETGPAGRPGE), and 704-728 (AGEKGSPGADGPAGAPGTPGPQGIA). Ser-560 bears the Phosphoserine mark. 2 stretches are compositionally biased toward pro residues: residues 769 to 779 (PPGPVGPPGIA) and 808 to 823 (AGPPGAPGAPGAPGPV). The span at 859 to 873 (RGDKGETGEQGDRGI) shows a compositional bias: basic and acidic residues. The segment covering 892-925 (PGEQGPSGASGPAGPRGPPGSAGAPGKDGINGIP) has biased composition (low complexity). A compositionally biased stretch (pro residues) spans 943–958 (VGPPGPPGPPGPPGPP).

This sequence belongs to the fibrillar collagen family. In terms of assembly, trimers of one alpha 2(I) and two alpha 1(I) chains. Post-translationally, prolines at the third position of the tripeptide repeating unit (G-X-Y) are hydroxylated in some or all of the chains. As to expression, forms the fibrils of tendon, ligaments and bones. In bones, the fibrils are mineralized with calcium hydroxyapatite.

The protein resides in the secreted. It localises to the extracellular space. The protein localises to the extracellular matrix. Its function is as follows. Type I collagen is a member of group I collagen (fibrillar forming collagen). This chain is Collagen alpha-1(I) chain, found in Macrauchenia sp.